A 486-amino-acid polypeptide reads, in one-letter code: Transcriptional regulator ERG (486 aa).

Over residues 41–54 the composition is skewed to polar residues; sequence TASSSSDYGQTSKM. 2 disordered regions span residues 41-62 and 79-99; these read TASSSSDYGQTSKMSPRVPQQD and PSQVNGSRNSPDECSVNKGGK. Phosphoserine is present on residues serine 55, serine 88, and serine 103. The region spanning 120–206 is the PNT domain; sequence VPPPNMTTNE…SHLHYLRETP (87 aa). The tract at residues 249–311 is disordered; it reads QRITTRPDLP…ILGPTSSRLA (63 aa). The span at 271–284 shows a compositional bias: polar residues; sequence SHLTPQSKAAQPSP. Lysine 289 is covalently cross-linked (Glycyl lysine isopeptide (Lys-Gly) (interchain with G-Cter in SUMO2)). Residues 318 to 398 constitute a DNA-binding region (ETS); that stretch reads IQLWQFLLEL…HGKRYAYKFD (81 aa).

The protein belongs to the ETS family. In terms of assembly, identified in a IGF2BP1-dependent mRNP granule complex containing untranslated mRNAs. Interacts with SETDB1.

It is found in the nucleus. It localises to the cytoplasm. Functionally, transcriptional regulator. May participate in transcriptional regulation through the recruitment of SETDB1 histone methyltransferase and subsequent modification of local chromatin structure. The polypeptide is Transcriptional regulator ERG (Erg) (Mus musculus (Mouse)).